The sequence spans 141 residues: Hemoglobin subunit alpha (141 aa).

Residues Val1–Arg141 form the Globin domain. Residue Ser3 is modified to Phosphoserine. N6-succinyllysine is present on residues Lys7 and Lys11. Position 16 is an N6-acetyllysine; alternate (Lys16). Lys16 is modified (N6-succinyllysine; alternate). Position 24 is a phosphotyrosine (Tyr24). Lys40 is modified (N6-succinyllysine). Residue Ser49 is modified to Phosphoserine. His58 is an O2 binding site. His87 provides a ligand contact to heme b. A Phosphoserine modification is found at Ser102. At Thr108 the chain carries Phosphothreonine. A phosphoserine mark is found at Ser124 and Ser131. A phosphothreonine mark is found at Thr134 and Thr137. A Phosphoserine modification is found at Ser138.

This sequence belongs to the globin family. In terms of assembly, heterotetramer of two alpha chains and two beta chains. In terms of tissue distribution, red blood cells.

Functionally, involved in oxygen transport from the lung to the various peripheral tissues. The polypeptide is Hemoglobin subunit alpha (Microtus pennsylvanicus (Meadow vole)).